Here is a 477-residue protein sequence, read N- to C-terminus: Cysteine--tRNA ligase (477 aa).

Residue C29 participates in Zn(2+) binding. The 'HIGH' region motif lies at 31-41; sequence PTVYDYPHLGH. Residues C209, H234, and E238 each coordinate Zn(2+). Positions 266–270 match the 'KMSKS' region motif; it reads KMSKS. Residue K269 participates in ATP binding.

Belongs to the class-I aminoacyl-tRNA synthetase family. The cofactor is Zn(2+).

Its subcellular location is the cytoplasm. It carries out the reaction tRNA(Cys) + L-cysteine + ATP = L-cysteinyl-tRNA(Cys) + AMP + diphosphate. The polypeptide is Cysteine--tRNA ligase (cysS) (Pyrococcus abyssi (strain GE5 / Orsay)).